Consider the following 483-residue polypeptide: Arginine/agmatine antiporter (483 aa).

12 helical membrane-spanning segments follow: residues 11–31 (ILGT…GGIF), 41–61 (ASAG…FFIA), 85–105 (GFGP…QIFG), 124–144 (YFAG…IWIF), 157–177 (FVNI…ILIT), 208–228 (STML…VISG), 239–259 (ATIL…LLPF), 289–309 (VLMN…WTIL), 336–356 (PSFS…LVYF), 364–384 (MLEI…LFLV), 415–435 (LWLI…LLAL), and 458–478 (EILK…LFSA).

This sequence belongs to the amino acid-polyamine-organocation (APC) superfamily. Basic amino acid/polyamine antiporter (APA) (TC 2.A.3.2) family.

The protein localises to the cell inner membrane. Catalyzes the exchange of L-arginine for agmatine. The arginine uptake by the bacterium in the macrophage may be a virulence factor against the host innate immune response. The chain is Arginine/agmatine antiporter (aaxC) from Chlamydia trachomatis serovar A (strain ATCC VR-571B / DSM 19440 / HAR-13).